Reading from the N-terminus, the 360-residue chain is Phospho-N-acetylmuramoyl-pentapeptide-transferase (360 aa).

10 consecutive transmembrane segments (helical) span residues 26–46 (TILGVLTALGIALMIGPAVIQ), 73–93 (TMGGALILVAIAVSTLLWADL), 98–118 (VWVVLLVTLAFGLIGGVDDAL), 136–156 (LQVLAALAASTFLFATATDPV), 168–188 (WVFPLGLGFIALATLVIVGSS), 199–219 (GLAIMPTVLVATGLAVFAYAS), 235–255 (GVGELVIFCGAIVGAGLGFLW), 263–283 (VFMGDVGALALGAALGVVAVA), 288–308 (IVLFIMGGIFVMETVSVMIQV), and 338–358 (VIVRFWIITVVLVLIGLAMLK).

It belongs to the glycosyltransferase 4 family. MraY subfamily. Requires Mg(2+) as cofactor.

Its subcellular location is the cell inner membrane. The catalysed reaction is UDP-N-acetyl-alpha-D-muramoyl-L-alanyl-gamma-D-glutamyl-meso-2,6-diaminopimeloyl-D-alanyl-D-alanine + di-trans,octa-cis-undecaprenyl phosphate = di-trans,octa-cis-undecaprenyl diphospho-N-acetyl-alpha-D-muramoyl-L-alanyl-D-glutamyl-meso-2,6-diaminopimeloyl-D-alanyl-D-alanine + UMP. It functions in the pathway cell wall biogenesis; peptidoglycan biosynthesis. Functionally, catalyzes the initial step of the lipid cycle reactions in the biosynthesis of the cell wall peptidoglycan: transfers peptidoglycan precursor phospho-MurNAc-pentapeptide from UDP-MurNAc-pentapeptide onto the lipid carrier undecaprenyl phosphate, yielding undecaprenyl-pyrophosphoryl-MurNAc-pentapeptide, known as lipid I. This Halorhodospira halophila (strain DSM 244 / SL1) (Ectothiorhodospira halophila (strain DSM 244 / SL1)) protein is Phospho-N-acetylmuramoyl-pentapeptide-transferase.